A 364-amino-acid polypeptide reads, in one-letter code: Putative serine/threonine-protein phosphatase C06A1.3 (364 aa).

The disordered stretch occupies residues 1–24 (MSTDGNNNKKGSKEGPKSSEISKF). Over residues 11–24 (GSKEGPKSSEISKF) the composition is skewed to basic and acidic residues. Aspartate 93, histidine 95, aspartate 121, and asparagine 153 together coordinate Mn(2+). The active-site Proton donor is histidine 154. Mn(2+) contacts are provided by histidine 202 and histidine 277.

Belongs to the PPP phosphatase family. PP-1 subfamily. The cofactor is Mn(2+).

The enzyme catalyses O-phospho-L-seryl-[protein] + H2O = L-seryl-[protein] + phosphate. The catalysed reaction is O-phospho-L-threonyl-[protein] + H2O = L-threonyl-[protein] + phosphate. In Caenorhabditis elegans, this protein is Putative serine/threonine-protein phosphatase C06A1.3.